Here is a 280-residue protein sequence, read N- to C-terminus: Release factor glutamine methyltransferase (280 aa).

S-adenosyl-L-methionine contacts are provided by residues 120 to 124 (GTGSG), aspartate 143, and asparagine 186. 186-189 (NPPY) provides a ligand contact to substrate.

The protein belongs to the protein N5-glutamine methyltransferase family. PrmC subfamily.

It carries out the reaction L-glutaminyl-[peptide chain release factor] + S-adenosyl-L-methionine = N(5)-methyl-L-glutaminyl-[peptide chain release factor] + S-adenosyl-L-homocysteine + H(+). Methylates the class 1 translation termination release factors RF1/PrfA and RF2/PrfB on the glutamine residue of the universally conserved GGQ motif. In Koribacter versatilis (strain Ellin345), this protein is Release factor glutamine methyltransferase.